The primary structure comprises 244 residues: MMAFRASVLTLYPEMFPGHLGFSLAGKAMERGQWSLDTVQIRDFATDRHRTVDDTPAGGGAGMVLKADVLARAIDSASETDTRPRLLMSPRGRPLTQERVRELAAGDGVIIVCGRFEGVDQRVIEARGLEEVSIGDYVLSGGEPAALTVLDAIVRILPGVMGNDLSGLHESFEGGLLEHPHYTRPQEWEGREIPAILTSGNHGAIEKWRHQEAVRLTRERRPDLLEKAGASPGKSGSNFGKHDA.

S-adenosyl-L-methionine contacts are provided by residues G114 and 134 to 139; that span reads IGDYVL. The disordered stretch occupies residues 220 to 244; that stretch reads RRPDLLEKAGASPGKSGSNFGKHDA.

This sequence belongs to the RNA methyltransferase TrmD family. Homodimer.

It is found in the cytoplasm. The enzyme catalyses guanosine(37) in tRNA + S-adenosyl-L-methionine = N(1)-methylguanosine(37) in tRNA + S-adenosyl-L-homocysteine + H(+). Its function is as follows. Specifically methylates guanosine-37 in various tRNAs. In Rhizobium johnstonii (strain DSM 114642 / LMG 32736 / 3841) (Rhizobium leguminosarum bv. viciae), this protein is tRNA (guanine-N(1)-)-methyltransferase.